A 91-amino-acid polypeptide reads, in one-letter code: UPF0335 protein BRADO1188 (91 aa).

This sequence belongs to the UPF0335 family.

The polypeptide is UPF0335 protein BRADO1188 (Bradyrhizobium sp. (strain ORS 278)).